The primary structure comprises 879 residues: Phosphoenolpyruvate carboxylase (879 aa).

Catalysis depends on residues histidine 138 and lysine 545.

The protein belongs to the PEPCase type 1 family. Requires Mg(2+) as cofactor.

It carries out the reaction oxaloacetate + phosphate = phosphoenolpyruvate + hydrogencarbonate. Its function is as follows. Forms oxaloacetate, a four-carbon dicarboxylic acid source for the tricarboxylic acid cycle. The protein is Phosphoenolpyruvate carboxylase of Histophilus somni (strain 2336) (Haemophilus somnus).